We begin with the raw amino-acid sequence, 299 residues long: Urease accessory protein UreD (299 aa).

The protein belongs to the UreD family. In terms of assembly, ureD, UreF and UreG form a complex that acts as a GTP-hydrolysis-dependent molecular chaperone, activating the urease apoprotein by helping to assemble the nickel containing metallocenter of UreC. The UreE protein probably delivers the nickel.

The protein resides in the cytoplasm. Required for maturation of urease via the functional incorporation of the urease nickel metallocenter. This chain is Urease accessory protein UreD, found in Natronomonas pharaonis (strain ATCC 35678 / DSM 2160 / CIP 103997 / JCM 8858 / NBRC 14720 / NCIMB 2260 / Gabara) (Halobacterium pharaonis).